We begin with the raw amino-acid sequence, 442 residues long: tRNA modification GTPase MnmE (442 aa).

(6S)-5-formyl-5,6,7,8-tetrahydrofolate is bound by residues arginine 27, glutamate 84, and lysine 124. The region spanning 221–366 is the TrmE-type G domain; it reads GLHVVIVGAP…LLDALQAFAE (146 aa). Residues 231–236, 250–256, and 275–278 each bind GTP; these read NAGKSS, SKEAGTT, and DTAG. Residues serine 235 and threonine 256 each contribute to the Mg(2+) site. Lysine 442 is a (6S)-5-formyl-5,6,7,8-tetrahydrofolate binding site.

This sequence belongs to the TRAFAC class TrmE-Era-EngA-EngB-Septin-like GTPase superfamily. TrmE GTPase family. Homodimer. Heterotetramer of two MnmE and two MnmG subunits. K(+) is required as a cofactor.

Its subcellular location is the cytoplasm. In terms of biological role, exhibits a very high intrinsic GTPase hydrolysis rate. Involved in the addition of a carboxymethylaminomethyl (cmnm) group at the wobble position (U34) of certain tRNAs, forming tRNA-cmnm(5)s(2)U34. In Brucella suis biovar 1 (strain 1330), this protein is tRNA modification GTPase MnmE.